Reading from the N-terminus, the 472-residue chain is 3-isopropylmalate dehydratase large subunit (472 aa).

Positions 347, 407, and 410 each coordinate [4Fe-4S] cluster.

The protein belongs to the aconitase/IPM isomerase family. LeuC type 1 subfamily. In terms of assembly, heterodimer of LeuC and LeuD. It depends on [4Fe-4S] cluster as a cofactor.

It catalyses the reaction (2R,3S)-3-isopropylmalate = (2S)-2-isopropylmalate. It participates in amino-acid biosynthesis; L-leucine biosynthesis; L-leucine from 3-methyl-2-oxobutanoate: step 2/4. Catalyzes the isomerization between 2-isopropylmalate and 3-isopropylmalate, via the formation of 2-isopropylmaleate. This Opitutus terrae (strain DSM 11246 / JCM 15787 / PB90-1) protein is 3-isopropylmalate dehydratase large subunit.